The sequence spans 700 residues: Elongation factor G (700 aa).

One can recognise a tr-type G domain in the interval 10-286 (SKVRNIGIMA…AVIDYLPSPL (277 aa)). Residues 19–26 (AHIDAGKT), 83–87 (DTPGH), and 137–140 (NKMD) each bind GTP.

Belongs to the TRAFAC class translation factor GTPase superfamily. Classic translation factor GTPase family. EF-G/EF-2 subfamily.

Its subcellular location is the cytoplasm. Catalyzes the GTP-dependent ribosomal translocation step during translation elongation. During this step, the ribosome changes from the pre-translocational (PRE) to the post-translocational (POST) state as the newly formed A-site-bound peptidyl-tRNA and P-site-bound deacylated tRNA move to the P and E sites, respectively. Catalyzes the coordinated movement of the two tRNA molecules, the mRNA and conformational changes in the ribosome. The protein is Elongation factor G of Mycolicibacterium gilvum (strain PYR-GCK) (Mycobacterium gilvum (strain PYR-GCK)).